Here is a 422-residue protein sequence, read N- to C-terminus: Glutamyl-tRNA reductase (422 aa).

Substrate is bound by residues 49-52 (TCNR), Ser107, 112-114 (EPQ), and Gln118. Catalysis depends on Cys50, which acts as the Nucleophile. 187 to 192 (GAGETI) lines the NADP(+) pocket.

It belongs to the glutamyl-tRNA reductase family. In terms of assembly, homodimer.

It catalyses the reaction (S)-4-amino-5-oxopentanoate + tRNA(Glu) + NADP(+) = L-glutamyl-tRNA(Glu) + NADPH + H(+). Its pathway is porphyrin-containing compound metabolism; protoporphyrin-IX biosynthesis; 5-aminolevulinate from L-glutamyl-tRNA(Glu): step 1/2. In terms of biological role, catalyzes the NADPH-dependent reduction of glutamyl-tRNA(Glu) to glutamate 1-semialdehyde (GSA). This is Glutamyl-tRNA reductase from Pseudomonas paraeruginosa (strain DSM 24068 / PA7) (Pseudomonas aeruginosa (strain PA7)).